The chain runs to 337 residues: Large ribosomal subunit protein uL3 (337 aa).

Positions 1–29 (MARHHQPRKGSVAFSPRKRAARETPRVKS) are disordered.

The protein belongs to the universal ribosomal protein uL3 family. In terms of assembly, part of the 50S ribosomal subunit. Forms a cluster with proteins L14 and L24e.

Functionally, one of the primary rRNA binding proteins, it binds directly near the 3'-end of the 23S rRNA, where it nucleates assembly of the 50S subunit. In Methanothermobacter thermautotrophicus (strain ATCC 29096 / DSM 1053 / JCM 10044 / NBRC 100330 / Delta H) (Methanobacterium thermoautotrophicum), this protein is Large ribosomal subunit protein uL3.